A 128-amino-acid chain; its full sequence is Holin-like protein CidA (128 aa).

Transmembrane regions (helical) follow at residues 4–24 (LLLT…INWV), 27–46 (ALHI…FTLL), 59–79 (GAAW…VGVI), and 88–108 (FGVS…VSTG).

It belongs to the CidA/LrgA family. CidA subfamily.

Its subcellular location is the cell membrane. Functionally, increases the activity of extracellular murein hydrolases possibly by mediating their export via hole formation. Inhibited by the antiholin-like proteins LrgAB. In an unstressed cell, the LrgAB products probably inhibit the function of the CidA protein. When a cell is stressed by the addition of antibiotics or by other factors in the environment, CidA possibly oligomerizes within the bacterial cell membrane, creating lesions that disrupt the proton motive force, which in turn results in loss of cell viability. These lesions are also hypothesized to regulate the subsequent cell lysis by either allowing the murein hydrolases access to the cell wall substrate and/or regulating their activity by a possible change in the cell wall pH that results from loss of membrane potential. In Bacillus velezensis (strain DSM 23117 / BGSC 10A6 / LMG 26770 / FZB42) (Bacillus amyloliquefaciens subsp. plantarum), this protein is Holin-like protein CidA.